Reading from the N-terminus, the 487-residue chain is Protein nucleotidyltransferase YdiU (487 aa).

Residues Gly90, Gly92, Arg93, Lys113, Asp125, Gly126, Arg176, and Arg183 each coordinate ATP. The active-site Proton acceptor is Asp252. Mg(2+) is bound by residues Asn253 and Asp262. Asp262 contributes to the ATP binding site.

The protein belongs to the SELO family. Requires Mg(2+) as cofactor. Mn(2+) serves as cofactor.

It catalyses the reaction L-seryl-[protein] + ATP = 3-O-(5'-adenylyl)-L-seryl-[protein] + diphosphate. The catalysed reaction is L-threonyl-[protein] + ATP = 3-O-(5'-adenylyl)-L-threonyl-[protein] + diphosphate. The enzyme catalyses L-tyrosyl-[protein] + ATP = O-(5'-adenylyl)-L-tyrosyl-[protein] + diphosphate. It carries out the reaction L-histidyl-[protein] + UTP = N(tele)-(5'-uridylyl)-L-histidyl-[protein] + diphosphate. It catalyses the reaction L-seryl-[protein] + UTP = O-(5'-uridylyl)-L-seryl-[protein] + diphosphate. The catalysed reaction is L-tyrosyl-[protein] + UTP = O-(5'-uridylyl)-L-tyrosyl-[protein] + diphosphate. In terms of biological role, nucleotidyltransferase involved in the post-translational modification of proteins. It can catalyze the addition of adenosine monophosphate (AMP) or uridine monophosphate (UMP) to a protein, resulting in modifications known as AMPylation and UMPylation. This is Protein nucleotidyltransferase YdiU from Ectopseudomonas mendocina (strain ymp) (Pseudomonas mendocina).